A 64-amino-acid polypeptide reads, in one-letter code: Prokaryotic ubiquitin-like protein Pup (64 aa).

The segment at 1 to 37 (MAQEQTKRGGGGGEDDDLSGGAGAGQERREKLAEETD) is disordered. Residues 21-58 (GAGAGQERREKLAEETDDLLDEIDDVLEENAEDFVRAY) form an ARC ATPase binding region. Residues 24–52 (AGQERREKLAEETDDLLDEIDDVLEENAE) adopt a coiled-coil conformation. Residue Q64 is modified to Deamidated glutamine. Residue Q64 forms an Isoglutamyl lysine isopeptide (Gln-Lys) (interchain with K-? in acceptor proteins) linkage.

This sequence belongs to the prokaryotic ubiquitin-like protein family. Strongly interacts with the proteasome-associated ATPase ARC through a hydrophobic interface; the interacting region of Pup lies in its C-terminal half. There is one Pup binding site per ARC hexamer ring. In terms of processing, is modified by deamidation of its C-terminal glutamine to glutamate by the deamidase Dop, a prerequisite to the subsequent pupylation process.

The protein operates within protein degradation; proteasomal Pup-dependent pathway. Its function is as follows. Protein modifier that is covalently attached to lysine residues of substrate proteins, thereby targeting them for proteasomal degradation. The tagging system is termed pupylation. This chain is Prokaryotic ubiquitin-like protein Pup, found in Mycobacterium sp. (strain JLS).